Reading from the N-terminus, the 425-residue chain is Enolase (425 aa).

Residue Gln-162 coordinates (2R)-2-phosphoglycerate. Residue Glu-204 is the Proton donor of the active site. 3 residues coordinate Mg(2+): Asp-241, Glu-284, and Asp-311. The (2R)-2-phosphoglycerate site is built by Lys-336, Arg-365, Ser-366, and Lys-387. Lys-336 acts as the Proton acceptor in catalysis.

Belongs to the enolase family. Mg(2+) is required as a cofactor.

The protein localises to the cytoplasm. Its subcellular location is the secreted. The protein resides in the cell surface. It catalyses the reaction (2R)-2-phosphoglycerate = phosphoenolpyruvate + H2O. It participates in carbohydrate degradation; glycolysis; pyruvate from D-glyceraldehyde 3-phosphate: step 4/5. Its function is as follows. Catalyzes the reversible conversion of 2-phosphoglycerate (2-PG) into phosphoenolpyruvate (PEP). It is essential for the degradation of carbohydrates via glycolysis. This is Enolase from Brucella melitensis biotype 2 (strain ATCC 23457).